We begin with the raw amino-acid sequence, 229 residues long: Glycine betaine/carnitine/choline transport system permease protein OpuCD (229 aa).

One can recognise an ABC transmembrane type-1 domain in the interval 22–202 (FYRHFLMSVY…LMAVIADLVM (181 aa)). 5 consecutive transmembrane segments (helical) span residues 27 to 47 (LMSV…GILI), 55 to 74 (GWVF…AMLA), 78 to 100 (LVMG…LPII), 148 to 168 (ALVI…GGLG), and 182 to 202 (AIIL…DLVM).

This sequence belongs to the binding-protein-dependent transport system permease family. CysTW subfamily. As to quaternary structure, the complex is composed of two ATP-binding proteins (OpuCA), two transmembrane proteins (OpuCB and OpuCD) and a solute-binding protein (OpuCC).

It is found in the cell membrane. Involved in a high affinity multicomponent binding-protein-dependent transport system for glycine betaine, carnitine and choline; probably responsible for the translocation of the substrate across the membrane. This chain is Glycine betaine/carnitine/choline transport system permease protein OpuCD (opuCD), found in Bacillus subtilis (strain 168).